A 463-amino-acid polypeptide reads, in one-letter code: Protoheme IX farnesyltransferase (463 aa).

The segment at 1 to 193 (MAESRTFTGL…AYFRLMKPRL (193 aa)) is unknown. The next 4 helical transmembrane spans lie at 6–26 (TFTG…LAGA), 54–74 (LLVA…VVAM), 89–109 (AAII…AIVA), and 115–135 (ALPG…VLAL). The tract at residues 144–170 (GSDDETPVKNPTPAPEPAGDDTPDRTP) is disordered. 9 helical membrane passes run 193–213 (LMWL…GQTL), 218–238 (VLLT…FNHV), 265–285 (ALAF…QVNA), 286–306 (LVAV…TLVL), 314–334 (TVLG…AADG), 336–356 (VGLP…AHFY), 387–407 (IVYY…LTPL), 409–429 (WLYA…VVLL), and 441–461 (AFHA…VDAL). The protoheme IX prenyltransferase stretch occupies residues 194-460 (MWLLCLVAAA…AVLIAIVVDA (267 aa)).

The protein in the C-terminal section; belongs to the UbiA prenyltransferase family. Protoheme IX farnesyltransferase subfamily.

It is found in the cell membrane. The catalysed reaction is heme b + (2E,6E)-farnesyl diphosphate + H2O = Fe(II)-heme o + diphosphate. It participates in porphyrin-containing compound metabolism; heme O biosynthesis; heme O from protoheme: step 1/1. Its function is as follows. Converts heme B (protoheme IX) to heme O by substitution of the vinyl group on carbon 2 of heme B porphyrin ring with a hydroxyethyl farnesyl side group. The polypeptide is Protoheme IX farnesyltransferase (ctaB) (Haloarcula marismortui (strain ATCC 43049 / DSM 3752 / JCM 8966 / VKM B-1809) (Halobacterium marismortui)).